The primary structure comprises 191 residues: uncharacterized protein (191 aa).

Residues 6-66 enclose the HTH tetR-type domain; that stretch reads GLTQKMIVDA…ELAVRGLTKL (61 aa). Positions 29-48 form a DNA-binding region, H-T-H motif; the sequence is SLAALSKKMNVRPPSLYNHI.

This is an uncharacterized protein from Bacillus subtilis (strain 168).